The chain runs to 419 residues: Zinc metalloprotease RasP (419 aa).

Helical transmembrane passes span Val4–Ile24, Ile173–Leu193, Leu349–Asp369, and Glu391–Trp411. His18 is a Zn(2+) binding site. Glu19 is an active-site residue. His22 contributes to the Zn(2+) binding site. The region spanning Ala184–Ala269 is the PDZ domain.

This sequence belongs to the peptidase M50B family. Requires Zn(2+) as cofactor.

It localises to the cell membrane. Is responsible for Site-2 cleavage of the RsiW anti-sigma factor. This results, after a third proteolytic step catalyzed by the ClpXP protease, in the release of SigW and the transcription activation of the genes under the control of the sigma-W factor. The protein is Zinc metalloprotease RasP (rasP) of Bacillus licheniformis (strain ATCC 14580 / DSM 13 / JCM 2505 / CCUG 7422 / NBRC 12200 / NCIMB 9375 / NCTC 10341 / NRRL NRS-1264 / Gibson 46).